A 228-amino-acid polypeptide reads, in one-letter code: MQKLKQQVFEANMDLPRYGLVTFTWGNVSAIDRERGLVVIKPSGVAYETMKADDMVVVDMSGKVVEGKYRPSSDTATHLELYRRYPSLGGIVHTHSTHATAWAPAGLAIPALGTTHADYFFGDIPCTRGLSEEEVQGEYELNTGKVIIETLGDAEPLHTPGIVVYQHGPFAWGKDAHDAVHNAVVMEEVAKMAWIARSINPQLNHIDSFLMNKHFMRKHGPNAYYGQK.

Residues 26-27, 43-44, and 72-73 contribute to the substrate site; these read GN, SG, and SS. Residues D74, H93, and H95 each contribute to the Zn(2+) site. D118 (proton donor/acceptor) is an active-site residue. H167 contributes to the Zn(2+) binding site. Y225 serves as the catalytic Proton donor/acceptor.

It belongs to the aldolase class II family. AraD/FucA subfamily. Requires Zn(2+) as cofactor.

It carries out the reaction L-ribulose 5-phosphate = D-xylulose 5-phosphate. The protein operates within cofactor degradation; L-ascorbate degradation; D-xylulose 5-phosphate from L-ascorbate: step 4/4. In terms of biological role, catalyzes the isomerization of L-ribulose 5-phosphate to D-xylulose 5-phosphate. Is involved in the anaerobic L-ascorbate utilization. This Shigella boydii serotype 18 (strain CDC 3083-94 / BS512) protein is L-ribulose-5-phosphate 4-epimerase UlaF.